Reading from the N-terminus, the 279-residue chain is Protease HtpX homolog (279 aa).

2 helical membrane passes run 4–24 and 34–54; these read IFLF…VLAV and GSLL…SLLM. H140 lines the Zn(2+) pocket. E141 is an active-site residue. Residue H144 participates in Zn(2+) binding. 2 helical membrane-spanning segments follow: residues 155–175 and 189–209; these read LIQG…ANLI and FLVS…IVMW. E215 is a Zn(2+) binding site.

The protein belongs to the peptidase M48B family. It depends on Zn(2+) as a cofactor.

The protein localises to the cell inner membrane. The sequence is that of Protease HtpX homolog from Neisseria meningitidis serogroup B (strain ATCC BAA-335 / MC58).